Consider the following 139-residue polypeptide: Nucleoside diphosphate kinase (139 aa).

6 residues coordinate ATP: K10, F58, R86, T92, R104, and N114. H117 serves as the catalytic Pros-phosphohistidine intermediate.

It belongs to the NDK family. In terms of assembly, homotetramer. Mg(2+) serves as cofactor.

The protein localises to the cytoplasm. It catalyses the reaction a 2'-deoxyribonucleoside 5'-diphosphate + ATP = a 2'-deoxyribonucleoside 5'-triphosphate + ADP. The catalysed reaction is a ribonucleoside 5'-diphosphate + ATP = a ribonucleoside 5'-triphosphate + ADP. Functionally, major role in the synthesis of nucleoside triphosphates other than ATP. The ATP gamma phosphate is transferred to the NDP beta phosphate via a ping-pong mechanism, using a phosphorylated active-site intermediate. This Rhodococcus jostii (strain RHA1) protein is Nucleoside diphosphate kinase.